The following is a 555-amino-acid chain: Dynein regulatory complex protein 11 (555 aa).

2 consecutive IQ domains span residues Glu-154–Gln-183 and His-199–Glu-226. Disordered stretches follow at residues Met-232–Lys-255, Lys-299–Ile-377, Ala-450–Ser-469, and Ala-501–Ala-555. Composition is skewed to basic and acidic residues over residues Lys-235–Gln-244 and Gly-338–Gly-367. Positions Lys-452–Lys-464 are enriched in basic residues. The segment covering Ala-501–Gly-521 has biased composition (basic and acidic residues). Basic residues predominate over residues Lys-537–Ser-546.

It belongs to the AAA ATPase family. DRC11 subfamily. Component of the nexin-dynein regulatory complex (N-DRC). Interacts with DRC5.

It is found in the cytoplasm. It localises to the cytoskeleton. The protein resides in the flagellum axoneme. Functionally, component of the nexin-dynein regulatory complex (N-DRC), a key regulator of ciliary/flagellar motility which maintains the alignment and integrity of the distal axoneme and regulates microtubule sliding in motile axonemes. This is Dynein regulatory complex protein 11 from Chlamydomonas reinhardtii (Chlamydomonas smithii).